A 140-amino-acid polypeptide reads, in one-letter code: Peptide methionine sulfoxide reductase MsrB (140 aa).

The MsrB domain maps to 10-132 (EEDWKSVLTP…NSVSLGFTKE (123 aa)). The Zn(2+) site is built by Cys-49, Cys-52, Cys-98, and Cys-101. Residue Cys-121 is the Nucleophile of the active site.

It belongs to the MsrB Met sulfoxide reductase family. Zn(2+) serves as cofactor.

The enzyme catalyses L-methionyl-[protein] + [thioredoxin]-disulfide + H2O = L-methionyl-(R)-S-oxide-[protein] + [thioredoxin]-dithiol. In Methanosarcina mazei (strain ATCC BAA-159 / DSM 3647 / Goe1 / Go1 / JCM 11833 / OCM 88) (Methanosarcina frisia), this protein is Peptide methionine sulfoxide reductase MsrB.